Reading from the N-terminus, the 78-residue chain is Mandibular organ-inhibiting hormone 1 (78 aa).

3 disulfide bridges follow: Cys7–Cys44, Cys24–Cys40, and Cys27–Cys53.

Belongs to the arthropod CHH/MIH/GIH/VIH hormone family. As to expression, produced by the medulla terminalis X-organ in the eyestalks and transported to the sinus gland where it is stored and released.

The protein localises to the secreted. Represses the synthesis of methyl farnesoate, the precursor of insect juvenile hormone III in the mandibular organ. This is Mandibular organ-inhibiting hormone 1 from Cancer pagurus (Rock crab).